Consider the following 152-residue polypeptide: TOMM20-like protein 1 (152 aa).

Residues 1-6 (MPSVRL) lie on the Mitochondrial intermembrane side of the membrane. A helical membrane pass occupies residues 7 to 27 (GVGLLAGLAAGGAVVLLSYCV). The Cytoplasmic segment spans residues 28-152 (YLDWRRHRDP…STEHLKDDPD (125 aa)).

It belongs to the Tom20 family.

It is found in the mitochondrion outer membrane. The polypeptide is TOMM20-like protein 1 (Tomm20l) (Mus musculus (Mouse)).